Here is a 426-residue protein sequence, read N- to C-terminus: Serine protease HTRA2, mitochondrial (426 aa).

The transit peptide at Met1–Arg30 directs the protein to the mitochondrion. Residues Arg30–His59 are disordered. Positions Val31–Gly78 are excised as a propeptide. A compositionally biased stretch (low complexity) spans Gln42 to Glu54. Residues Leu68 to Ile86 traverse the membrane as a helical segment. The short motif at Ala79–Ser82 is the IAP-binding element. Residues Ser143–Leu306 are serine protease. Active-site charge relay system residues include His161, Asp193, and Ser270. Positions Met329 to Val414 constitute a PDZ domain.

It belongs to the peptidase S1C family. Interacts with th/DIAP1 (via BIR 2 domain).

Its subcellular location is the mitochondrion intermembrane space. It is found in the mitochondrion membrane. The catalysed reaction is Cleavage of non-polar aliphatic amino-acids at the P1 position, with a preference for Val, Ile and Met. At the P2 and P3 positions, Arg is selected most strongly with a secondary preference for other hydrophilic residues.. Its function is as follows. Serine protease that shows proteolytic activity against a non-specific substrate beta-casein. Promotes or induces cell death either by direct binding to and inhibition of BIRC proteins (also called inhibitor of apoptosis proteins, IAPs), leading to an increase in caspase activity, or by a BIRC inhibition-independent, caspase-independent and serine protease activity-dependent mechanism. Can antagonize antiapoptotic activity of th/Diap1 by directly inducing the degradation of th/Diap1. This chain is Serine protease HTRA2, mitochondrial, found in Drosophila ananassae (Fruit fly).